A 379-amino-acid polypeptide reads, in one-letter code: Anhydro-N-acetylmuramic acid kinase (379 aa).

Gly-9–Asp-16 serves as a coordination point for ATP.

Belongs to the anhydro-N-acetylmuramic acid kinase family.

The enzyme catalyses 1,6-anhydro-N-acetyl-beta-muramate + ATP + H2O = N-acetyl-D-muramate 6-phosphate + ADP + H(+). The protein operates within amino-sugar metabolism; 1,6-anhydro-N-acetylmuramate degradation. It functions in the pathway cell wall biogenesis; peptidoglycan recycling. Functionally, catalyzes the specific phosphorylation of 1,6-anhydro-N-acetylmuramic acid (anhMurNAc) with the simultaneous cleavage of the 1,6-anhydro ring, generating MurNAc-6-P. Is required for the utilization of anhMurNAc either imported from the medium or derived from its own cell wall murein, and thus plays a role in cell wall recycling. The chain is Anhydro-N-acetylmuramic acid kinase from Picosynechococcus sp. (strain ATCC 27264 / PCC 7002 / PR-6) (Agmenellum quadruplicatum).